Here is a 547-residue protein sequence, read N- to C-terminus: CTP synthase (547 aa).

An amidoligase domain region spans residues 1 to 265; that stretch reads MARFVFITGG…DQAVLDAFSI (265 aa). Position 13 (S13) interacts with CTP. S13 contributes to the UTP binding site. ATP-binding positions include 14–19 and D71; that span reads SLGKGL. The Mg(2+) site is built by D71 and E139. CTP contacts are provided by residues 146–148, 186–191, and K222; these read DIE and KTKPTQ. UTP-binding positions include 186–191 and K222; that span reads KTKPTQ. Positions 291-546 constitute a Glutamine amidotransferase type-1 domain; that stretch reads NVAIVGKYTQ…VRAAKEVSRL (256 aa). G353 contacts L-glutamine. Catalysis depends on C380, which acts as the Nucleophile; for glutamine hydrolysis. L-glutamine is bound by residues 381-384, E404, and R474; that span reads LGMQ. Catalysis depends on residues H519 and E521.

This sequence belongs to the CTP synthase family. In terms of assembly, homotetramer.

It catalyses the reaction UTP + L-glutamine + ATP + H2O = CTP + L-glutamate + ADP + phosphate + 2 H(+). The catalysed reaction is L-glutamine + H2O = L-glutamate + NH4(+). The enzyme catalyses UTP + NH4(+) + ATP = CTP + ADP + phosphate + 2 H(+). It functions in the pathway pyrimidine metabolism; CTP biosynthesis via de novo pathway; CTP from UDP: step 2/2. Allosterically activated by GTP, when glutamine is the substrate; GTP has no effect on the reaction when ammonia is the substrate. The allosteric effector GTP functions by stabilizing the protein conformation that binds the tetrahedral intermediate(s) formed during glutamine hydrolysis. Inhibited by the product CTP, via allosteric rather than competitive inhibition. In terms of biological role, catalyzes the ATP-dependent amination of UTP to CTP with either L-glutamine or ammonia as the source of nitrogen. Regulates intracellular CTP levels through interactions with the four ribonucleotide triphosphates. This Dinoroseobacter shibae (strain DSM 16493 / NCIMB 14021 / DFL 12) protein is CTP synthase.